The sequence spans 390 residues: T-cell surface glycoprotein CD1e, membrane-associated (390 aa).

The signal sequence occupies residues 1–14; that stretch reads MLLLILLFFKGLVC. Residues 15–33 constitute a propeptide, removed in sCD1e; that stretch reads HEKSIVGPQPLGWHHPAEA. Asn49 and Asn70 each carry an N-linked (GlcNAc...) asparagine glycan. 2 disulfides stabilise this stretch: Cys131/Cys194 and Cys234/Cys288. An Ig-like domain is found at 215-306; that stretch reads PEVWLSRGPS…GHDIIIHWGG (92 aa). The helical transmembrane segment at 305–325 threads the bilayer; the sequence is GGYSILLILMYVAVIVTLVTL.

As to quaternary structure, heterodimer with B2M (beta-2-microglobulin). The association with B2M appears to be facilitated by the presence of the propeptide. In terms of processing, mono-ubiquitinated. Proteolytically cleaved in endosomes to yield a soluble form.

It localises to the golgi apparatus membrane. The protein resides in the early endosome. It is found in the late endosome. Its subcellular location is the lysosome lumen. In terms of biological role, T-cell surface glycoprotein CD1e, soluble is required for the presentation of glycolipid antigens on the cell surface. The membrane-associated form is not active. The chain is T-cell surface glycoprotein CD1e, membrane-associated (CD1E) from Cavia porcellus (Guinea pig).